The sequence spans 236 residues: 3-deoxy-D-manno-octulosonic acid kinase (236 aa).

The active site involves D167.

It belongs to the protein kinase superfamily. KdkA/RfaP family.

It localises to the cell inner membrane. The catalysed reaction is an alpha-Kdo-(2-&gt;6)-lipid IVA + ATP = a 4-O-phospho-alpha-Kdo-(2-&gt;6)-lipid IVA + ADP + H(+). It functions in the pathway bacterial outer membrane biogenesis; LPS core biosynthesis. Its function is as follows. Catalyzes the ATP-dependent phosphorylation of the 3-deoxy-D-manno-octulosonic acid (Kdo) residue in Kdo-lipid IV(A) at the 4-OH position. This is 3-deoxy-D-manno-octulosonic acid kinase from Vibrio vulnificus (strain YJ016).